Consider the following 182-residue polypeptide: uncharacterized protein (182 aa).

It is found in the plastid. It localises to the cyanelle. This is an uncharacterized protein from Cyanophora paradoxa.